Here is a 629-residue protein sequence, read N- to C-terminus: tRNA uridine 5-carboxymethylaminomethyl modification enzyme MnmG (629 aa).

13–18 (GGGHAG) contributes to the FAD binding site. An NAD(+)-binding site is contributed by 273–287 (GPRYCPSIEDKIHRF).

It belongs to the MnmG family. Homodimer. Heterotetramer of two MnmE and two MnmG subunits. FAD is required as a cofactor.

It localises to the cytoplasm. Functionally, NAD-binding protein involved in the addition of a carboxymethylaminomethyl (cmnm) group at the wobble position (U34) of certain tRNAs, forming tRNA-cmnm(5)s(2)U34. This is tRNA uridine 5-carboxymethylaminomethyl modification enzyme MnmG from Shewanella baltica (strain OS223).